Reading from the N-terminus, the 343-residue chain is DNA-directed RNA polymerase subunit alpha (343 aa).

Residues 1 to 236 (MQEHYYKFWR…EQLQIFLTFD (236 aa)) are alpha N-terminal domain (alpha-NTD). Residues 253-343 (LNENLFRSVD…QPPQKRETQQ (91 aa)) are alpha C-terminal domain (alpha-CTD).

This sequence belongs to the RNA polymerase alpha chain family. In terms of assembly, homodimer. The RNAP catalytic core consists of 2 alpha, 1 beta, 1 beta' and 1 omega subunit. When a sigma factor is associated with the core the holoenzyme is formed, which can initiate transcription.

The catalysed reaction is RNA(n) + a ribonucleoside 5'-triphosphate = RNA(n+1) + diphosphate. In terms of biological role, DNA-dependent RNA polymerase catalyzes the transcription of DNA into RNA using the four ribonucleoside triphosphates as substrates. In Bdellovibrio bacteriovorus (strain ATCC 15356 / DSM 50701 / NCIMB 9529 / HD100), this protein is DNA-directed RNA polymerase subunit alpha.